Reading from the N-terminus, the 148-residue chain is Transthyretin-like protein 2 (148 aa).

An N-terminal signal peptide occupies residues 1–17 (MSKYAILGLVLVGTVAS). N-linked (GlcNAc...) asparagine glycosylation is present at Asn-77.

Belongs to the nematode transthyretin-like family.

It is found in the secreted. The protein is Transthyretin-like protein 2 (ttr-2) of Caenorhabditis elegans.